Consider the following 317-residue polypeptide: Putrescine transport system permease protein PotH (317 aa).

Over Met-1–Leu-31 the chain is Cytoplasmic. The helical transmembrane segment at Val-32 to Val-51 threads the bilayer. Residues Phe-52–Gln-104 are Periplasmic-facing. The 207-residue stretch at Tyr-99 to Phe-305 folds into the ABC transmembrane type-1 domain. Residues Val-105–Val-124 form a helical membrane-spanning segment. The Cytoplasmic segment spans residues Ala-125–Asn-133. Residues Ile-134–Ala-153 form a helical membrane-spanning segment. Residues Trp-154–Asn-184 are Periplasmic-facing. Residues Leu-185 to Tyr-204 traverse the membrane as a helical segment. The Cytoplasmic portion of the chain corresponds to Thr-205 to Gly-239. The helical transmembrane segment at Gly-240–Pro-259 threads the bilayer. Topologically, residues Glu-260–Trp-284 are periplasmic. A helical transmembrane segment spans residues Pro-285–Trp-304. The Cytoplasmic portion of the chain corresponds to Phe-305 to Gly-317.

The protein belongs to the binding-protein-dependent transport system permease family. CysTW subfamily. As to quaternary structure, the complex is composed of two ATP-binding proteins (PotG), two transmembrane proteins (PotH and PotI) and a solute-binding protein (PotF).

It localises to the cell inner membrane. Transport is feedback inhibited by intracellular polyamines. Part of the ABC transporter complex PotFGHI involved in putrescine uptake. Responsible for the translocation of the substrate across the membrane. Imports putrescine for maintenance of the optimal concentration of polyamines necessary for cell growth in the presence of glucose. This chain is Putrescine transport system permease protein PotH, found in Escherichia coli (strain K12).